Consider the following 149-residue polypeptide: Nucleoside diphosphate kinase (149 aa).

6 residues coordinate ATP: K9, F57, R85, T91, R102, and N112. Catalysis depends on H115, which acts as the Pros-phosphohistidine intermediate.

The protein belongs to the NDK family. Homotetramer. It depends on Mg(2+) as a cofactor.

Its subcellular location is the cytoplasm. It carries out the reaction a 2'-deoxyribonucleoside 5'-diphosphate + ATP = a 2'-deoxyribonucleoside 5'-triphosphate + ADP. The catalysed reaction is a ribonucleoside 5'-diphosphate + ATP = a ribonucleoside 5'-triphosphate + ADP. In terms of biological role, major role in the synthesis of nucleoside triphosphates other than ATP. The ATP gamma phosphate is transferred to the NDP beta phosphate via a ping-pong mechanism, using a phosphorylated active-site intermediate. The chain is Nucleoside diphosphate kinase from Roseiflexus sp. (strain RS-1).